Here is an 805-residue protein sequence, read N- to C-terminus: Transforming acidic coiled-coil-containing protein 1 (805 aa).

Ala2 carries the post-translational modification N-acetylalanine. Ala2 carries the N-myristoyl glycine lipid modification. Residues 2-55 are interaction with LSM7 and SNRPG; it reads AFSPWQILSPVQWAKWTWSAVRGGAAGEDEAGGPEGDPEEEDSQAETKSLSFSS. Ser4, Ser10, and Ser44 each carry phosphoserine. Residues 23 to 140 form a disordered region; that stretch reads RGGAAGEDEA…SVKNFREEPE (118 aa). The span at 28–45 shows a compositional bias: acidic residues; the sequence is GEDEAGGPEGDPEEEDSQ. Polar residues-rich tracts occupy residues 47–60 and 111–128; these read ETKSLSFSSDSEGN and SKTCSKPSENEVPQQAID. Basic and acidic residues predominate over residues 130 to 140; the sequence is HSVKNFREEPE. Phosphoserine occurs at positions 147 and 153. The tract at residues 152–259 is interaction with TDRD7; it reads FSIETKDSTD…TNAAVEGTPL (108 aa). The interaction with YEATS4 stretch occupies residues 206–427; sequence EASAEADLKA…DPDNFDESMD (222 aa). SPAZ domains lie at 215–297 and 359–507; these read AGNS…TPGT and SKSA…TDEE. The interval 215-457 is disordered; sequence AGNSCPELVP…VNEILESPKK (243 aa). The Bipartite nuclear localization signal 1 signature appears at 226–241; sequence RRSKLRKPKPVPLRKK. A compositionally biased stretch (basic residues) spans 226-242; sequence RRSKLRKPKPVPLRKKA. A Phosphoserine; by AURKC modification is found at Ser228. Phosphoserine is present on residues Ser248 and Ser276. Composition is skewed to polar residues over residues 296 to 305, 377 to 413, and 431 to 447; these read GTLSSDTNDS, LSQTSSKPDPSQWESPSFNPFGSHSVLQNSPPLSSEG, and PTTTLTSSDFCSPTGNH. Ser381 and Ser406 each carry phosphoserine. The Bipartite nuclear localization signal 2 motif lies at 455-471; it reads PKKAKSRLITSGCKVKK. Phosphoserine is present on Ser483. The interval 493 to 526 is disordered; the sequence is ISDISNRDGHATDEEKLASTSCGQKSAGAEVKGE. Over residues 497–509 the composition is skewed to basic and acidic residues; that stretch reads SNRDGHATDEEKL. Tyr533 bears the Phosphotyrosine mark. A Phosphoserine modification is found at Ser591. Residues 610 to 805 adopt a coiled-coil conformation; that stretch reads IREEIITKEI…ELIAKLGKTD (196 aa). The interaction with CH-TOG stretch occupies residues 701–805; it reads VLEGFKKNEE…ELIAKLGKTD (105 aa).

This sequence belongs to the TACC family. Interacts with KIAA0097/CH-TOG and with the oncogenic transcription factor YEATS4. Interacts with AURKA, AURKB and AURKC. Interacts with LSM7, TDRD7 and SNRPG. Interacts with GCN5L2 and PCAF. Interacts with the thyroid hormone receptors THRB and THRA, predominantly with isoform alpha-2. The interaction with THRA isoform alpha-1 and THRB is decreased in the presence of thyroid hormone T3. Also interacts with other nuclear receptors, including ESR1, NR3C1, PPARG, RARA and RXRA, preferentially in the absence of their hormonal ligands. Isoform 1 is heavily phosphorylated; isoform 6 is not. Isoform 1, isoform 3 and isoform 5 are ubiquitous. Isoform 2 is strongly expressed in the brain, weakly detectable in lung and colon, and overexpressed in gastric cancer. Isoform 4 is not detected in normal tissues, but strong expression was found in gastric cancer tissues. Down-regulated in a subset of cases of breast cancer.

It localises to the cytoplasm. Its subcellular location is the nucleus. The protein localises to the cytoskeleton. It is found in the microtubule organizing center. The protein resides in the centrosome. It localises to the midbody. Its subcellular location is the membrane. Its function is as follows. Involved in transcription regulation induced by nuclear receptors, including in T3 thyroid hormone and all-trans retinoic acid pathways. Might promote the nuclear localization of the receptors. Likely involved in the processes that promote cell division prior to the formation of differentiated tissues. The sequence is that of Transforming acidic coiled-coil-containing protein 1 (TACC1) from Homo sapiens (Human).